The following is a 276-amino-acid chain: Probable endonuclease 4 (276 aa).

Positions 70, 108, 144, 177, 180, 211, 224, 226, and 256 each coordinate Zn(2+).

This sequence belongs to the AP endonuclease 2 family. Zn(2+) serves as cofactor.

The enzyme catalyses Endonucleolytic cleavage to 5'-phosphooligonucleotide end-products.. Endonuclease IV plays a role in DNA repair. It cleaves phosphodiester bonds at apurinic or apyrimidinic (AP) sites, generating a 3'-hydroxyl group and a 5'-terminal sugar phosphate. This Metamycoplasma arthritidis (strain 158L3-1) (Mycoplasma arthritidis) protein is Probable endonuclease 4.